The chain runs to 483 residues: Regulatory protein ViaA (483 aa).

It belongs to the ViaA family. Homodimer. Interacts with RavA.

It is found in the cytoplasm. In terms of biological role, component of the RavA-ViaA chaperone complex, which may act on the membrane to optimize the function of some of the respiratory chains. ViaA stimulates the ATPase activity of RavA. The sequence is that of Regulatory protein ViaA from Salmonella heidelberg (strain SL476).